Consider the following 200-residue polypeptide: Recombination protein RecR (200 aa).

Residues 57–72 (CQECRTFTEQDVCHIC) form a C4-type zinc finger. Positions 81 to 176 (GQLCVVESPA…TASRIAHGVP (96 aa)) constitute a Toprim domain.

This sequence belongs to the RecR family.

May play a role in DNA repair. It seems to be involved in an RecBC-independent recombinational process of DNA repair. It may act with RecF and RecO. This chain is Recombination protein RecR, found in Vibrio cholerae serotype O1 (strain ATCC 39541 / Classical Ogawa 395 / O395).